The chain runs to 90 residues: uncharacterized protein (90 aa).

Residues 1-18 (MKTLPVLVLSLTLLTVFS) form the signal peptide. The interval 28–50 (QAKQLLRSRRQDRPSKPGFPDEP) is disordered.

The protein localises to the secreted. This is an uncharacterized protein from Homo sapiens (Human).